The following is a 281-amino-acid chain: Pantothenate synthetase (281 aa).

Residue 30-37 (MGYLHEGH) coordinates ATP. The Proton donor role is filled by histidine 37. Glutamine 61 is a binding site for (R)-pantoate. Glutamine 61 is a binding site for beta-alanine. An ATP-binding site is contributed by 147–150 (GQKD). Glutamine 153 lines the (R)-pantoate pocket. ATP is bound by residues valine 176 and 184–187 (MSSR).

The protein belongs to the pantothenate synthetase family. As to quaternary structure, homodimer.

It localises to the cytoplasm. The catalysed reaction is (R)-pantoate + beta-alanine + ATP = (R)-pantothenate + AMP + diphosphate + H(+). It functions in the pathway cofactor biosynthesis; (R)-pantothenate biosynthesis; (R)-pantothenate from (R)-pantoate and beta-alanine: step 1/1. Catalyzes the condensation of pantoate with beta-alanine in an ATP-dependent reaction via a pantoyl-adenylate intermediate. The chain is Pantothenate synthetase from Heliobacterium modesticaldum (strain ATCC 51547 / Ice1).